Consider the following 21-residue polypeptide: Protein IroK (21 aa).

Possible increased expression of this protein (due to mutations upstream of the start codon) is proposed to be responsible for resistance to 3-hydroxypropionic acid (3-HP). This Escherichia coli (strain K12) protein is Protein IroK (iroK).